Consider the following 404-residue polypeptide: Serine/threonine transporter SstT (404 aa).

The next 9 helical transmembrane spans lie at 17 to 37 (IGIGVVIGLLLGILLPDVTAI), 44 to 64 (FVGALKAIAPLLVFALVVQAI), 75 to 95 (ITLIIVLYLLGTFLAALVAVI), 138 to 158 (ALATANYIGVLAWALIFGLAL), 179 to 199 (IVVWIINVAPIGIMGLVFSTV), 212 to 232 (LLILVLVGTMLFVALVVNPLL), 287 to 307 (IPLGAMINMGGAAITINVLTL), 319 to 339 (FLTALLLSVVAAISACGASGV), and 354 to 374 (FGISSDLAMQVVGVGFIVGVI).

It belongs to the dicarboxylate/amino acid:cation symporter (DAACS) (TC 2.A.23) family.

The protein resides in the cell membrane. It catalyses the reaction L-serine(in) + Na(+)(in) = L-serine(out) + Na(+)(out). The enzyme catalyses L-threonine(in) + Na(+)(in) = L-threonine(out) + Na(+)(out). Its function is as follows. Involved in the import of serine and threonine into the cell, with the concomitant import of sodium (symport system). The polypeptide is Serine/threonine transporter SstT (Streptococcus equi subsp. zooepidemicus (strain MGCS10565)).